Here is a 421-residue protein sequence, read N- to C-terminus: Ankyrin repeat and SOCS box protein 6 (421 aa).

ANK repeat units lie at residues 67–97, 102–131, 136–166, 170–205, 226–255, and 260–289; these read EGVS…NLNF, TYYT…DINR, HESS…DVNA, HGKT…DVKA, GGDK…DPSE, and ESLT…AYNC. Residues 360-415 enclose the SOCS box domain; it reads ALHFSLRQLESYPPPLKHLCRVAIRLYLQPWPVDVKVKALPLPDRLKWYLLSEHSG.

This sequence belongs to the ankyrin SOCS box (ASB) family. Binds APS. Identified in a complex with ELOB and ELOC. Interacts with CUL5 and RNF7. Interacts with SQSTM1.

Its subcellular location is the cytoplasm. It functions in the pathway protein modification; protein ubiquitination. Functionally, probable substrate-recognition component of a SCF-like ECS (Elongin-Cullin-SOCS-box protein) E3 ubiquitin-protein ligase complex which mediates the ubiquitination and subsequent proteasomal degradation of target proteins. May play a role in the regulation of cell proliferation and autophagy by promoting the ubiquitination and degradation of SQSTM1. This chain is Ankyrin repeat and SOCS box protein 6 (ASB6), found in Pongo abelii (Sumatran orangutan).